The primary structure comprises 206 residues: Superoxide dismutase [Mn] (206 aa).

4 residues coordinate Mn(2+): His27, His82, Asp168, and His172.

Belongs to the iron/manganese superoxide dismutase family. Homodimer. Requires Mn(2+) as cofactor.

It catalyses the reaction 2 superoxide + 2 H(+) = H2O2 + O2. Functionally, destroys superoxide anion radicals which are normally produced within the cells and which are toxic to biological systems. This chain is Superoxide dismutase [Mn] (sodA), found in Salmonella typhi.